Consider the following 457-residue polypeptide: UDP-N-acetylmuramate--L-alanine ligase (457 aa).

ATP is bound at residue 109-115 (GTDGKTT).

Belongs to the MurCDEF family.

Its subcellular location is the cytoplasm. The catalysed reaction is UDP-N-acetyl-alpha-D-muramate + L-alanine + ATP = UDP-N-acetyl-alpha-D-muramoyl-L-alanine + ADP + phosphate + H(+). The protein operates within cell wall biogenesis; peptidoglycan biosynthesis. Its function is as follows. Cell wall formation. This chain is UDP-N-acetylmuramate--L-alanine ligase, found in Thermotoga petrophila (strain ATCC BAA-488 / DSM 13995 / JCM 10881 / RKU-1).